A 263-amino-acid polypeptide reads, in one-letter code: uncharacterized protein (263 aa).

ATP is bound at residue 31–38 (GPTGSGKT).

This sequence belongs to the CbbQ/NirQ/NorQ/GpvN family.

This is an uncharacterized protein from Staphylococcus aureus (strain bovine RF122 / ET3-1).